Reading from the N-terminus, the 325-residue chain is UPF0285 protein MmarC7_1666 (325 aa).

Belongs to the UPF0285 family.

This chain is UPF0285 protein MmarC7_1666, found in Methanococcus maripaludis (strain C7 / ATCC BAA-1331).